A 973-amino-acid polypeptide reads, in one-letter code: ATP-dependent DNA helicase homolog RECG1, chloroplastic/mitochondrial (973 aa).

The tract at residues 1 to 208 (MAAVTLSPCS…ATSEVEATSD (208 aa)) is sufficient for chloroplastic and mitochondrial trgeting. Residues 174-200 (LLQNDDSSDPREDILDDGSSFTSKTAT) form a disordered region. Residues 536-725 (DLKRPVPMNR…LYGDISLTQI (190 aa)) enclose the Helicase ATP-binding domain. ATP is bound at residue 549–556 (GDVGCGKT). The DEQQ box motif lies at 655–658 (DEQQ). In terms of domain architecture, Helicase C-terminal spans 746-904 (GIKEVYSMML…GFYLANIDLL (159 aa)).

Belongs to the helicase family. RecG subfamily. In terms of tissue distribution, expressed in most tissues, not seen in pollen, ovules or developing seeds.

Its subcellular location is the plastid. It is found in the chloroplast. The protein localises to the mitochondrion. The enzyme catalyses Couples ATP hydrolysis with the unwinding of duplex DNA by translocating in the 3'-5' direction.. It carries out the reaction ATP + H2O = ADP + phosphate + H(+). Its function is as follows. Plays a critical role in recombination and DNA repair. Helps process Holliday junction (HJ) intermediates to mature products by catalyzing branch migration. Has replication fork regression activity, unwinds stalled or blocked replication forks to make a HJ that can be resolved. Has a DNA unwinding activity characteristic of a DNA helicase with 3'-5' polarity. Plays a role in recombination surveillance and repair of double-stranded (ds)DNA breaks in the mitochondrion. May be able to dissociate D- and R-loops. Able to complement UV sensitivity of a recG deletion in E.coli. The sequence is that of ATP-dependent DNA helicase homolog RECG1, chloroplastic/mitochondrial from Arabidopsis thaliana (Mouse-ear cress).